The sequence spans 427 residues: Serine hydroxymethyltransferase (427 aa).

(6S)-5,6,7,8-tetrahydrofolate-binding positions include L122 and 126–128; that span reads GHL. K231 carries the N6-(pyridoxal phosphate)lysine modification. 355-357 provides a ligand contact to (6S)-5,6,7,8-tetrahydrofolate; the sequence is SPF.

This sequence belongs to the SHMT family. Homodimer. It depends on pyridoxal 5'-phosphate as a cofactor.

Its subcellular location is the cytoplasm. It catalyses the reaction (6R)-5,10-methylene-5,6,7,8-tetrahydrofolate + glycine + H2O = (6S)-5,6,7,8-tetrahydrofolate + L-serine. The protein operates within one-carbon metabolism; tetrahydrofolate interconversion. It functions in the pathway amino-acid biosynthesis; glycine biosynthesis; glycine from L-serine: step 1/1. Functionally, catalyzes the reversible interconversion of serine and glycine with tetrahydrofolate (THF) serving as the one-carbon carrier. This reaction serves as the major source of one-carbon groups required for the biosynthesis of purines, thymidylate, methionine, and other important biomolecules. Also exhibits THF-independent aldolase activity toward beta-hydroxyamino acids, producing glycine and aldehydes, via a retro-aldol mechanism. The sequence is that of Serine hydroxymethyltransferase from Nostoc punctiforme (strain ATCC 29133 / PCC 73102).